Here is a 310-residue protein sequence, read N- to C-terminus: Choline trimethylamine-lyase activating enzyme (310 aa).

In terms of domain architecture, Radical SAM core spans 17–304 (YDGPGVRTLV…EACIRKYDFP (288 aa)). Cys31, Cys35, Cys38, Cys57, Cys60, Cys63, and Cys99 together coordinate [4Fe-4S] cluster. 37-39 (WCS) serves as a coordination point for S-adenosyl-L-methionine. 4Fe-4S ferredoxin-type domains lie at 48-77 (YQVL…ISAS) and 79-109 (LRHG…VVGE). Residues Gly139, 188-190 (DVK), and His264 contribute to the S-adenosyl-L-methionine site.

This sequence belongs to the organic radical-activating enzymes family. In terms of assembly, monomer. The cofactor is [4Fe-4S] cluster.

It catalyses the reaction glycyl-[protein] + reduced [flavodoxin] + S-adenosyl-L-methionine = glycin-2-yl radical-[protein] + semiquinone [flavodoxin] + 5'-deoxyadenosine + L-methionine + H(+). The protein operates within amine and polyamine metabolism; choline degradation. Its function is as follows. Catalyzes activation of the choline trimethylamine-lyase CutC under anaerobic conditions by generation of an organic free radical on a glycine residue, via a homolytic cleavage of S-adenosyl-L-methionine (SAM). Is involved in the anaerobic choline utilization pathway that allows D.alaskensis to grow on choline as a source of carbon and energy. The chain is Choline trimethylamine-lyase activating enzyme from Oleidesulfovibrio alaskensis (strain ATCC BAA-1058 / DSM 17464 / G20) (Desulfovibrio alaskensis).